Here is a 245-residue protein sequence, read N- to C-terminus: 8-amino-3,8-dideoxy-manno-octulosonate cytidylyltransferase (245 aa).

Belongs to the KdsB family.

It is found in the cytoplasm. The enzyme catalyses 8-amino-3,8-dideoxy-alpha-D-manno-octulosonate + CTP = CMP-8-amino-3,8-dideoxy-alpha-D-manno-oct-2-ulosonate + diphosphate. The protein operates within bacterial outer membrane biogenesis; lipopolysaccharide biosynthesis. Activates KDO8N (a required 8-carbon sugar) for incorporation into bacterial lipopolysaccharide in the Shewanella genus. This Shewanella pealeana (strain ATCC 700345 / ANG-SQ1) protein is 8-amino-3,8-dideoxy-manno-octulosonate cytidylyltransferase.